The primary structure comprises 95 residues: uncharacterized protein (95 aa).

A helical membrane pass occupies residues 29 to 53 (LVSTATCMAALFLRFKLIAWVAFIL).

The protein resides in the membrane. This is an uncharacterized protein from Schizosaccharomyces pombe (strain 972 / ATCC 24843) (Fission yeast).